The sequence spans 975 residues: Translation initiation factor IF-2 (975 aa).

Disordered regions lie at residues 49-110 (KLSG…APKA) and 193-339 (AAAP…GRGA). The segment covering 63–72 (KKTAARKAAP) has biased composition (basic residues). 3 stretches are compositionally biased toward low complexity: residues 73 to 94 (KKAAVAAPVPEADASSAAAKTP), 193 to 202 (AAAPEAPAPQ), and 209 to 225 (VVGTSGVSSSATPASAP). A compositionally biased stretch (basic and acidic residues) spans 308–318 (GADRGGRDFDK). A compositionally biased stretch (low complexity) spans 324–336 (GPSAPAAGPAAAG). The region spanning 469–639 (TRPPVVTVMG…KLVAEVAELK (171 aa)) is the tr-type G domain. Residues 478-485 (GHVDHGKT) are G1. A GTP-binding site is contributed by 478–485 (GHVDHGKT). Positions 503-507 (GITQH) are G2. The tract at residues 525 to 528 (DTPG) is G3. Residues 525–529 (DTPGH) and 579–582 (NKID) contribute to the GTP site. Residues 579-582 (NKID) form a G4 region. The tract at residues 615-617 (SAL) is G5.

This sequence belongs to the TRAFAC class translation factor GTPase superfamily. Classic translation factor GTPase family. IF-2 subfamily.

It is found in the cytoplasm. Its function is as follows. One of the essential components for the initiation of protein synthesis. Protects formylmethionyl-tRNA from spontaneous hydrolysis and promotes its binding to the 30S ribosomal subunits. Also involved in the hydrolysis of GTP during the formation of the 70S ribosomal complex. In Bdellovibrio bacteriovorus (strain ATCC 15356 / DSM 50701 / NCIMB 9529 / HD100), this protein is Translation initiation factor IF-2.